Here is a 314-residue protein sequence, read N- to C-terminus: GTPase Era (314 aa).

Residues 21 to 189 (KSGFVGIIGR…QKTLINLLEP (169 aa)) form the Era-type G domain. Residues 29-36 (GRPNVGKS) form a G1 region. 29 to 36 (GRPNVGKS) lines the GTP pocket. A G2 region spans residues 55-59 (QTTRN). The segment at 76–79 (DTPG) is G3. Residues 76 to 80 (DTPGI) and 138 to 141 (NKSD) each bind GTP. Residues 138 to 141 (NKSD) are G4. Residues 168 to 170 (FSA) are G5. A KH type-2 domain is found at 212 to 296 (IREQILQQTR…YLQLFVKVEP (85 aa)).

It belongs to the TRAFAC class TrmE-Era-EngA-EngB-Septin-like GTPase superfamily. Era GTPase family. Monomer.

It is found in the cytoplasm. Its subcellular location is the cell inner membrane. Its function is as follows. An essential GTPase that binds both GDP and GTP, with rapid nucleotide exchange. Plays a role in 16S rRNA processing and 30S ribosomal subunit biogenesis and possibly also in cell cycle regulation and energy metabolism. The polypeptide is GTPase Era (Rippkaea orientalis (strain PCC 8801 / RF-1) (Cyanothece sp. (strain PCC 8801))).